The primary structure comprises 316 residues: tRNA uridine(34) hydroxylase (316 aa).

The Rhodanese domain maps to 123-217 (LDEDTVVIDA…YGKNPETRGE (95 aa)). The active-site Cysteine persulfide intermediate is the Cys177.

The protein belongs to the TrhO family.

It carries out the reaction uridine(34) in tRNA + AH2 + O2 = 5-hydroxyuridine(34) in tRNA + A + H2O. Functionally, catalyzes oxygen-dependent 5-hydroxyuridine (ho5U) modification at position 34 in tRNAs. The protein is tRNA uridine(34) hydroxylase of Enterococcus faecalis (strain ATCC 700802 / V583).